Consider the following 298-residue polypeptide: Large ribosomal subunit protein uL18 (298 aa).

It belongs to the universal ribosomal protein uL18 family. As to quaternary structure, component of the large ribosomal subunit. Mature ribosomes consist of a small (40S) and a large (60S) subunit. The 40S subunit contains about 32 different proteins and 1 molecule of RNA (18S). The 60S subunit contains 45 different proteins and 3 molecules of RNA (25S, 5.8S and 5S).

Its subcellular location is the cytoplasm. Component of the ribosome, a large ribonucleoprotein complex responsible for the synthesis of proteins in the cell. The small ribosomal subunit (SSU) binds messenger RNAs (mRNAs) and translates the encoded message by selecting cognate aminoacyl-transfer RNA (tRNA) molecules. The large subunit (LSU) contains the ribosomal catalytic site termed the peptidyl transferase center (PTC), which catalyzes the formation of peptide bonds, thereby polymerizing the amino acids delivered by tRNAs into a polypeptide chain. The nascent polypeptides leave the ribosome through a tunnel in the LSU and interact with protein factors that function in enzymatic processing, targeting, and the membrane insertion of nascent chains at the exit of the ribosomal tunnel. The protein is Large ribosomal subunit protein uL18 of Candida albicans (strain SC5314 / ATCC MYA-2876) (Yeast).